We begin with the raw amino-acid sequence, 319 residues long: Acetyl-coenzyme A carboxylase carboxyl transferase subunit alpha (319 aa).

The CoA carboxyltransferase C-terminal domain maps to N35–D296.

Belongs to the AccA family. As to quaternary structure, acetyl-CoA carboxylase is a heterohexamer composed of biotin carboxyl carrier protein (AccB), biotin carboxylase (AccC) and two subunits each of ACCase subunit alpha (AccA) and ACCase subunit beta (AccD).

It localises to the cytoplasm. It carries out the reaction N(6)-carboxybiotinyl-L-lysyl-[protein] + acetyl-CoA = N(6)-biotinyl-L-lysyl-[protein] + malonyl-CoA. It participates in lipid metabolism; malonyl-CoA biosynthesis; malonyl-CoA from acetyl-CoA: step 1/1. Functionally, component of the acetyl coenzyme A carboxylase (ACC) complex. First, biotin carboxylase catalyzes the carboxylation of biotin on its carrier protein (BCCP) and then the CO(2) group is transferred by the carboxyltransferase to acetyl-CoA to form malonyl-CoA. The chain is Acetyl-coenzyme A carboxylase carboxyl transferase subunit alpha from Escherichia coli O45:K1 (strain S88 / ExPEC).